Reading from the N-terminus, the 530-residue chain is Phosphoenolpyruvate carboxykinase (ATP) (530 aa).

Substrate is bound by residues arginine 57, tyrosine 193, and lysine 199. Residues lysine 199, histidine 218, and 234 to 242 (GLSGTGKTT) each bind ATP. Mn(2+) contacts are provided by lysine 199 and histidine 218. A Mn(2+)-binding site is contributed by aspartate 255. ATP contacts are provided by glutamate 283, arginine 320, and threonine 445. A substrate-binding site is contributed by arginine 320.

Belongs to the phosphoenolpyruvate carboxykinase (ATP) family. The cofactor is Mn(2+).

Its subcellular location is the cytoplasm. It catalyses the reaction oxaloacetate + ATP = phosphoenolpyruvate + ADP + CO2. It participates in carbohydrate biosynthesis; gluconeogenesis. In terms of biological role, involved in the gluconeogenesis. Catalyzes the conversion of oxaloacetate (OAA) to phosphoenolpyruvate (PEP) through direct phosphoryl transfer between the nucleoside triphosphate and OAA. The protein is Phosphoenolpyruvate carboxykinase (ATP) of Leptospira interrogans serogroup Icterohaemorrhagiae serovar copenhageni (strain Fiocruz L1-130).